Consider the following 508-residue polypeptide: Flavonoid 3'-monooxygenase CYP75B137 (508 aa).

Residues 2–22 (LTFFFLWISTLLLSSFIVYLL) traverse the membrane as a helical segment. C445 contacts heme.

It belongs to the cytochrome P450 family. Heme serves as cofactor. In terms of tissue distribution, expressed in young cromes.

It is found in the membrane. It catalyses the reaction a 3'-unsubstituted flavone + reduced [NADPH--hemoprotein reductase] + O2 = a 3'-hydroxyflavone + oxidized [NADPH--hemoprotein reductase] + H2O + H(+). It carries out the reaction (2S)-naringenin + reduced [NADPH--hemoprotein reductase] + O2 = (S)-eriodictyol + oxidized [NADPH--hemoprotein reductase] + H2O + H(+). The catalysed reaction is (2R,3R)-dihydrokaempferol + reduced [NADPH--hemoprotein reductase] + O2 = (2R,3R)-dihydroquercetin + oxidized [NADPH--hemoprotein reductase] + H2O + H(+). The enzyme catalyses kaempferol + reduced [NADPH--hemoprotein reductase] + O2 = quercetin + oxidized [NADPH--hemoprotein reductase] + H2O + H(+). It participates in flavonoid metabolism. In terms of biological role, flavonoid 3'-hydroxylase that catalyzes the 3'-hydroxylation of flavanones, dihydroflavonols and flavonols. Converts narigenin to eriodictyol, dihydrokaempferol to dihydroquercetin and kaempferol to quercetin. The protein is Flavonoid 3'-monooxygenase CYP75B137 of Crocosmia x crocosmiiflora (Montbretia).